The primary structure comprises 419 residues: Mitochondrial chaperone BCS1 (419 aa).

Topologically, residues 2–15 are mitochondrial intermembrane; it reads PLSDFILALKDNPY. A helical transmembrane segment spans residues 16–32; sequence FGAGFGLVGVGTALALA. Over 33 to 419 the chain is Mitochondrial matrix; the sequence is RKGVQLGLVA…AIHNAESLRR (387 aa). Position 181 is a phosphotyrosine (tyrosine 181). ATP is bound at residue 230-237; that stretch reads GPPGCGKS.

Belongs to the AAA ATPase family. BCS1 subfamily. Interacts with LETM1. As to expression, ubiquitous.

The protein resides in the mitochondrion inner membrane. It carries out the reaction ATP + H2O = ADP + phosphate + H(+). Functionally, chaperone necessary for the incorporation of Rieske iron-sulfur protein UQCRFS1 into the mitochondrial respiratory chain complex III. Plays an important role in the maintenance of mitochondrial tubular networks, respiratory chain assembly and formation of the LETM1 complex. In Homo sapiens (Human), this protein is Mitochondrial chaperone BCS1 (BCS1L).